A 33-amino-acid polypeptide reads, in one-letter code: Beta-amanitin proprotein (33 aa).

A propeptide spanning residues 1–10 is cleaved from the precursor; the sequence is MSDINATRLP. A cross-link (cyclopeptide (Ile-Pro)) is located at residues 11–18; it reads IWGIGCDP. Positions 12 to 16 form a cross-link, 2'-cysteinyl-6'-hydroxytryptophan sulfoxide (Trp-Cys); sequence WGIGC. The propeptide occupies 19–33; the sequence is CVGDDVTAVLTRGEA.

Belongs to the MSDIN fungal toxin family. Processed by the macrocyclase-peptidase enzyme POPB to yield a toxic cyclic decapeptide. POPB first removes 10 residues from the N-terminus. Conformational trapping of the remaining peptide forces the enzyme to release this intermediate rather than proceed to macrocyclization. The enzyme rebinds the remaining peptide in a different conformation and catalyzes macrocyclization of the N-terminal 8 residues.

Its function is as follows. Toxin belonging to the bicyclic octapeptides amatoxins that acts by binding non-competitively to RNA polymerase II and greatly slowing the elongation of transcripts from target promoters. In Amanita pallidorosea, this protein is Beta-amanitin proprotein.